A 457-amino-acid polypeptide reads, in one-letter code: Aromatic amino acid permease FywP (457 aa).

12 helical membrane-spanning segments follow: residues 16-36, 43-63, 91-111, 114-134, 154-174, 205-225, 243-263, 292-312, 342-362, 373-393, 403-423, and 424-444; these read IVMLSLGGAIGSGLFLGSGKV, SVLLSYVLAGLTLYVVMYGVG, FADWVYWATWMAVLIAEEAGV, FLAILIPGVPLWVFALVVAVL, AFIKVAVILLLIALGIYLLVI, GFLTSLLVVIFSFGGSELAAI, GVLIRIISFYVIPIFLFLHLL, IVLVIIVIAIFSAVNSAIYAT, NAILVSSFVLFIGVLLSAVLG, ISFTISIVWILLLVAALVLYF, VKLATLVVLIALSLVFIMQII, and TNPWTLSVFALVICLLSYFSY.

It belongs to the amino acid-polyamine-organocation (APC) superfamily. Amino acid transporter (AAT) (TC 2.A.3.1) family.

The protein resides in the cell membrane. In terms of biological role, involved in phenylalanine and tyrosine uptake. Also has affinity for tryptophan. Plays no significant role in the excretion of accumulated phenylalanine. This chain is Aromatic amino acid permease FywP, found in Lactococcus lactis subsp. cremoris (strain MG1363).